Consider the following 71-residue polypeptide: DNA-directed RNA polymerase subunit epsilon (71 aa).

This sequence belongs to the RNA polymerase subunit epsilon family. RNAP is composed of a core of 2 alpha, a beta and a beta' subunit. The core is associated with a delta subunit, and at least one of epsilon or omega. When a sigma factor is associated with the core the holoenzyme is formed, which can initiate transcription.

It catalyses the reaction RNA(n) + a ribonucleoside 5'-triphosphate = RNA(n+1) + diphosphate. In terms of biological role, a non-essential component of RNA polymerase (RNAP). This chain is DNA-directed RNA polymerase subunit epsilon, found in Staphylococcus carnosus (strain TM300).